Here is a 192-residue protein sequence, read N- to C-terminus: uncharacterized protein (192 aa).

The 132-residue stretch at histidine 29 to serine 160 folds into the Nudix hydrolase domain. The Nudix box motif lies at glycine 67–alanine 89. Positions 83 and 87 each coordinate Mg(2+).

This sequence belongs to the Nudix hydrolase family. PCD1 subfamily. The cofactor is Mn(2+). It depends on Mg(2+) as a cofactor.

Functionally, probably mediates the hydrolysis of some nucleoside diphosphate derivatives. This is an uncharacterized protein from Shigella flexneri.